The chain runs to 330 residues: tRNA U34 carboxymethyltransferase (330 aa).

Carboxy-S-adenosyl-L-methionine contacts are provided by residues lysine 91, tryptophan 105, lysine 110, glycine 130, 152–154 (DPS), 181–182 (IE), methionine 196, tyrosine 200, and arginine 315.

This sequence belongs to the class I-like SAM-binding methyltransferase superfamily. CmoB family. As to quaternary structure, homotetramer.

It catalyses the reaction carboxy-S-adenosyl-L-methionine + 5-hydroxyuridine(34) in tRNA = 5-carboxymethoxyuridine(34) in tRNA + S-adenosyl-L-homocysteine + H(+). Catalyzes carboxymethyl transfer from carboxy-S-adenosyl-L-methionine (Cx-SAM) to 5-hydroxyuridine (ho5U) to form 5-carboxymethoxyuridine (cmo5U) at position 34 in tRNAs. This chain is tRNA U34 carboxymethyltransferase, found in Shewanella sediminis (strain HAW-EB3).